Reading from the N-terminus, the 171-residue chain is S-ribosylhomocysteine lyase (171 aa).

H54, H58, and C128 together coordinate Fe cation.

It belongs to the LuxS family. Homodimer. It depends on Fe cation as a cofactor.

The catalysed reaction is S-(5-deoxy-D-ribos-5-yl)-L-homocysteine = (S)-4,5-dihydroxypentane-2,3-dione + L-homocysteine. Involved in the synthesis of autoinducer 2 (AI-2) which is secreted by bacteria and is used to communicate both the cell density and the metabolic potential of the environment. The regulation of gene expression in response to changes in cell density is called quorum sensing. Catalyzes the transformation of S-ribosylhomocysteine (RHC) to homocysteine (HC) and 4,5-dihydroxy-2,3-pentadione (DPD). This chain is S-ribosylhomocysteine lyase, found in Edwardsiella ictaluri (strain 93-146).